Reading from the N-terminus, the 1005-residue chain is Mediator of RNA polymerase II transcription subunit 24 (1005 aa).

It belongs to the Mediator complex subunit 24 family. In terms of assembly, component of the Mediator complex.

The protein localises to the nucleus. Functionally, component of the Mediator complex, a coactivator involved in the regulated transcription of nearly all RNA polymerase II-dependent genes. Mediator functions as a bridge to convey information from gene-specific regulatory proteins to the basal RNA polymerase II transcription machinery. Mediator is recruited to promoters by direct interactions with regulatory proteins and serves as a scaffold for the assembly of a functional preinitiation complex with RNA polymerase II and the general transcription factors. The polypeptide is Mediator of RNA polymerase II transcription subunit 24 (MED24) (Aedes aegypti (Yellowfever mosquito)).